A 480-amino-acid chain; its full sequence is Ochratoxinase (480 aa).

Zn(2+)-binding residues include His-111, His-113, Lys-246, His-287, and His-307. The active site involves Lys-246. Asp-378 is an active-site residue.

The protein belongs to the metallo-dependent hydrolases superfamily. Ochratoxinase amidase 2 family. In terms of assembly, homooctamer. Requires Zn(2+) as cofactor.

The protein resides in the secreted. The enzyme catalyses ochratoxin A + H2O = ochratoxin alpha + L-phenylalanine. With respect to regulation, the Zn(2+)-specific chelator 1,10-phenanthroline inhibits the enzyme activity. Its function is as follows. Carboxypeptidase that catalyzes the release of a C-terminal amino acid with specific catalytic activity for aromatic amino acids such as phenylalanine. Is able to degrade ochratoxin A, one of the five major mycotoxins most harmful to humans and animals that is produced by Aspergillus and Penicillium species and occurs in a wide range of agricultural products. The chain is Ochratoxinase from Aspergillus niger (strain ATCC MYA-4892 / CBS 513.88 / FGSC A1513).